The following is a 156-amino-acid chain: SsrA-binding protein (156 aa).

Residues 135–150 are compositionally biased toward basic and acidic residues; sequence KRDTIKDREWQRDRSR. The tract at residues 135-156 is disordered; it reads KRDTIKDREWQRDRSRIMKKNT.

It belongs to the SmpB family.

Its subcellular location is the cytoplasm. In terms of biological role, required for rescue of stalled ribosomes mediated by trans-translation. Binds to transfer-messenger RNA (tmRNA), required for stable association of tmRNA with ribosomes. tmRNA and SmpB together mimic tRNA shape, replacing the anticodon stem-loop with SmpB. tmRNA is encoded by the ssrA gene; the 2 termini fold to resemble tRNA(Ala) and it encodes a 'tag peptide', a short internal open reading frame. During trans-translation Ala-aminoacylated tmRNA acts like a tRNA, entering the A-site of stalled ribosomes, displacing the stalled mRNA. The ribosome then switches to translate the ORF on the tmRNA; the nascent peptide is terminated with the 'tag peptide' encoded by the tmRNA and targeted for degradation. The ribosome is freed to recommence translation, which seems to be the essential function of trans-translation. In Legionella pneumophila (strain Paris), this protein is SsrA-binding protein.